Reading from the N-terminus, the 290-residue chain is GTPase Era (290 aa).

In terms of domain architecture, Era-type G spans 2–168; it reads KVCIISILGR…IEILKEYAYN (167 aa). The tract at residues 10-17 is G1; sequence GRPNVGKS. Position 10-17 (10-17) interacts with GTP; it reads GRPNVGKS. A G2 region spans residues 36–40; that stretch reads QTTRD. Residues 57-60 form a G3 region; that stretch reads DTPG. GTP is bound by residues 57-61 and 118-121; these read DTPGI and SKID. The tract at residues 118–121 is G4; sequence SKID. The G5 stretch occupies residues 147 to 149; the sequence is VSN. A KH type-2 domain is found at 199-275; that stretch reads LTDELPHSIA…TLNLKVKVSN (77 aa).

This sequence belongs to the TRAFAC class TrmE-Era-EngA-EngB-Septin-like GTPase superfamily. Era GTPase family. In terms of assembly, monomer.

The protein resides in the cytoplasm. It localises to the cell membrane. Functionally, an essential GTPase that binds both GDP and GTP, with rapid nucleotide exchange. Plays a role in 16S rRNA processing and 30S ribosomal subunit biogenesis and possibly also in cell cycle regulation and energy metabolism. This chain is GTPase Era, found in Mycoplasmopsis agalactiae (strain NCTC 10123 / CIP 59.7 / PG2) (Mycoplasma agalactiae).